Consider the following 270-residue polypeptide: Mediator of RNA polymerase II transcription subunit 4 (270 aa).

The interval 1 to 22 (MAASSSGEKEKERLGGGLGVAG) is disordered. Ala-2 bears the N-acetylalanine mark. Coiled-coil stretches lie at residues 24-48 (NSTR…IEML) and 90-131 (HHEM…AKEK). Phosphoserine is present on Ser-32. Positions 226–270 (DMSMNMLPPNHSSDFLLEPPGHNKENEDDVEIMSTDSSSSSSESD) are disordered. Positions 259–270 (STDSSSSSSESD) are enriched in low complexity.

This sequence belongs to the Mediator complex subunit 4 family. In terms of assembly, component of the Mediator complex, which is composed of MED1, MED4, MED6, MED7, MED8, MED9, MED10, MED11, MED12, MED13, MED13L, MED14, MED15, MED16, MED17, MED18, MED19, MED20, MED21, MED22, MED23, MED24, MED25, MED26, MED27, MED29, MED30, MED31, CCNC, CDK8 and CDC2L6/CDK11. The MED12, MED13, CCNC and CDK8 subunits form a distinct module termed the CDK8 module. Mediator containing the CDK8 module is less active than Mediator lacking this module in supporting transcriptional activation. Individual preparations of the Mediator complex lacking one or more distinct subunits have been variously termed ARC, CRSP, DRIP, PC2, SMCC and TRAP.

It localises to the nucleus. Component of the Mediator complex, a coactivator involved in the regulated transcription of nearly all RNA polymerase II-dependent genes. Mediator functions as a bridge to convey information from gene-specific regulatory proteins to the basal RNA polymerase II transcription machinery. Mediator is recruited to promoters by direct interactions with regulatory proteins and serves as a scaffold for the assembly of a functional preinitiation complex with RNA polymerase II and the general transcription factors. The chain is Mediator of RNA polymerase II transcription subunit 4 (MED4) from Homo sapiens (Human).